The primary structure comprises 424 residues: MSDTNSAWIEQNLQRQRKMLEDKQKQKRHQSAGSVRTTTTTSSMSMNNMKDYPAFETSLPFSMSDHTSNMNTPLIPTPQAPPRNHTLTTRQSSMPATDTLIQINDYPENDISAKLSKVNLTPCVVSDDEDSDRRSYRESPWHNDIVADKIKTDILPDYNYIKNNLQKFVDEPAQEHCLYRCSITRHKSGVDKTMYPTYYLHLEEMDTDKKAKIFLLAARKRKKSTTANYLLSTDPTNLSREGDGYCAKVRSNALGTHFTIYDNGHNPKKTDNQFSIRQELAAVIYETNVLGFKGPRKMTVIMPGIEPGNDSKPAVRCIHRPVLEKHTLLEKNRSGDTNSLKVLTNKSPQWNDETQSYVLNFHGRVTQASVKNFQIIHPNSPEYIVMQFGRVSEDEFTMDFRYPLSAVQAFGIAMTSFHGKLACE.

Positions 19 to 47 (MLEDKQKQKRHQSAGSVRTTTTTSSMSMN) are disordered. Positions 37 to 47 (TTTTTSSMSMN) are enriched in low complexity.

The protein belongs to the TUB family. In terms of assembly, interacts with rgb-3.

It localises to the cytoplasm. It is found in the cell projection. Its subcellular location is the axon. The protein resides in the dendrite. The protein localises to the cilium. In terms of biological role, has a role in fat regulation independent of daf-16. Implicated in ciliar sensory function which is required for normal sensory behavior such as chemotaxis. Functions in life span control via the insulin/IGF-1 pathway. Thought to be involved in neuronal trafficking. This is Tubby protein homolog 1 from Caenorhabditis briggsae.